The chain runs to 342 residues: Phenylalanine--tRNA ligase alpha subunit (342 aa).

E257 lines the Mg(2+) pocket.

This sequence belongs to the class-II aminoacyl-tRNA synthetase family. Phe-tRNA synthetase alpha subunit type 1 subfamily. As to quaternary structure, tetramer of two alpha and two beta subunits. It depends on Mg(2+) as a cofactor.

It localises to the cytoplasm. The catalysed reaction is tRNA(Phe) + L-phenylalanine + ATP = L-phenylalanyl-tRNA(Phe) + AMP + diphosphate + H(+). This chain is Phenylalanine--tRNA ligase alpha subunit, found in Chlamydia trachomatis serovar A (strain ATCC VR-571B / DSM 19440 / HAR-13).